The sequence spans 384 residues: Chaperone protein DnaJ (384 aa).

Residues 4–68 (DFYDVLGVSR…EKRQMYDQLG (65 aa)) form the J domain. 2 disordered regions span residues 74-105 (QAQK…GMGG) and 113-132 (NNLF…QGRD). The segment covering 79–105 (GAGGGGGGRGQGNPFGGGGNPFGGMGG) has biased composition (gly residues). A CR-type zinc finger spans residues 147 to 229 (GVERDVTIRR…CRGSGRVRRT (83 aa)). Cys-160, Cys-163, Cys-177, Cys-180, Cys-203, Cys-206, Cys-217, and Cys-220 together coordinate Zn(2+). CXXCXGXG motif repeat units lie at residues 160-167 (CPECDGEG), 177-184 (CSECNGSG), 203-210 (CRACGGEG), and 217-224 (CSECRGSG).

It belongs to the DnaJ family. In terms of assembly, homodimer. Zn(2+) is required as a cofactor.

It is found in the cytoplasm. Its function is as follows. Participates actively in the response to hyperosmotic and heat shock by preventing the aggregation of stress-denatured proteins and by disaggregating proteins, also in an autonomous, DnaK-independent fashion. Unfolded proteins bind initially to DnaJ; upon interaction with the DnaJ-bound protein, DnaK hydrolyzes its bound ATP, resulting in the formation of a stable complex. GrpE releases ADP from DnaK; ATP binding to DnaK triggers the release of the substrate protein, thus completing the reaction cycle. Several rounds of ATP-dependent interactions between DnaJ, DnaK and GrpE are required for fully efficient folding. Also involved, together with DnaK and GrpE, in the DNA replication of plasmids through activation of initiation proteins. The sequence is that of Chaperone protein DnaJ from Haloferax mediterranei (strain ATCC 33500 / DSM 1411 / JCM 8866 / NBRC 14739 / NCIMB 2177 / R-4) (Halobacterium mediterranei).